A 155-amino-acid polypeptide reads, in one-letter code: Large ribosomal subunit protein uL22c (155 aa).

It belongs to the universal ribosomal protein uL22 family. Part of the 50S ribosomal subunit.

It is found in the plastid. Its subcellular location is the chloroplast. In terms of biological role, this protein binds specifically to 23S rRNA. Functionally, the globular domain of the protein is located near the polypeptide exit tunnel on the outside of the subunit, while an extended beta-hairpin is found that lines the wall of the exit tunnel in the center of the 70S ribosome. In Nicotiana tomentosiformis (Tobacco), this protein is Large ribosomal subunit protein uL22c (rpl22).